Reading from the N-terminus, the 160-residue chain is Transcription antitermination protein NusB (160 aa).

The protein belongs to the NusB family.

Involved in transcription antitermination. Required for transcription of ribosomal RNA (rRNA) genes. Binds specifically to the boxA antiterminator sequence of the ribosomal RNA (rrn) operons. The sequence is that of Transcription antitermination protein NusB from Sinorhizobium medicae (strain WSM419) (Ensifer medicae).